The primary structure comprises 786 residues: Endonuclease MutS2 (786 aa).

An ATP-binding site is contributed by glycine 335–threonine 342. In terms of domain architecture, Smr spans leucine 711–lysine 786.

It belongs to the DNA mismatch repair MutS family. MutS2 subfamily. Homodimer. Binds to stalled ribosomes, contacting rRNA.

Functionally, endonuclease that is involved in the suppression of homologous recombination and thus may have a key role in the control of bacterial genetic diversity. Acts as a ribosome collision sensor, splitting the ribosome into its 2 subunits. Detects stalled/collided 70S ribosomes which it binds and splits by an ATP-hydrolysis driven conformational change. Acts upstream of the ribosome quality control system (RQC), a ribosome-associated complex that mediates the extraction of incompletely synthesized nascent chains from stalled ribosomes and their subsequent degradation. Probably generates substrates for RQC. The sequence is that of Endonuclease MutS2 from Bacillus thuringiensis (strain Al Hakam).